Consider the following 125-residue polypeptide: Phosphoribosyl-AMP cyclohydrolase (125 aa).

Asp74 is a binding site for Mg(2+). Position 75 (Cys75) interacts with Zn(2+). Positions 76 and 78 each coordinate Mg(2+). Zn(2+)-binding residues include Cys92 and Cys99.

It belongs to the PRA-CH family. Homodimer. It depends on Mg(2+) as a cofactor. Zn(2+) is required as a cofactor.

Its subcellular location is the cytoplasm. It catalyses the reaction 1-(5-phospho-beta-D-ribosyl)-5'-AMP + H2O = 1-(5-phospho-beta-D-ribosyl)-5-[(5-phospho-beta-D-ribosylamino)methylideneamino]imidazole-4-carboxamide. Its pathway is amino-acid biosynthesis; L-histidine biosynthesis; L-histidine from 5-phospho-alpha-D-ribose 1-diphosphate: step 3/9. In terms of biological role, catalyzes the hydrolysis of the adenine ring of phosphoribosyl-AMP. The sequence is that of Phosphoribosyl-AMP cyclohydrolase from Citrifermentans bemidjiense (strain ATCC BAA-1014 / DSM 16622 / JCM 12645 / Bem) (Geobacter bemidjiensis).